The sequence spans 32 residues: Coenzyme PQQ synthesis protein A (32 aa).

A cross-link (pyrroloquinoline quinone (Glu-Tyr)) is located at residues 16–20 (EINMY).

This sequence belongs to the PqqA family.

The protein operates within cofactor biosynthesis; pyrroloquinoline quinone biosynthesis. Its function is as follows. Required for coenzyme pyrroloquinoline quinone (PQQ) biosynthesis. PQQ is probably formed by cross-linking a specific glutamate to a specific tyrosine residue and excising these residues from the peptide. This is Coenzyme PQQ synthesis protein A from Dinoroseobacter shibae (strain DSM 16493 / NCIMB 14021 / DFL 12).